A 256-amino-acid chain; its full sequence is MDGGGLDEEFINVYPSAFGTHSSRCTSGAPVLSAVDRPTSVCNESISPYFSFPSNIGSGSFTFGCHLENSYKVPQNAVFPPGVAKQNGQFANKPVDHGEASSWLKEFAFYQGCARSYPRIPAFIDLPVVQRAMMGDLRHETCLTMEGHQHWDWSNNCSSQLYCFQDQTRSPHIWKPSLTEEAAAASFCQRGRKKRVPYTKFQLKELEREYNTTKFITKENRRRIASSTNLSERQVTIWFQNRRVKDKKRPDVCIKC.

The homeobox DNA-binding region spans G191–P250.

It belongs to the Abd-B homeobox family.

The protein localises to the nucleus. Functionally, sequence-specific transcription factor which is part of a developmental regulatory system that provides cells with specific positional identities on the anterior-posterior axis. In Danio rerio (Zebrafish), this protein is Homeobox protein Hox-D13a (hoxd13a).